Here is a 367-residue protein sequence, read N- to C-terminus: Phosphoribosylaminoimidazole-succinocarboxamide synthase (367 aa).

It belongs to the SAICAR synthetase family.

The enzyme catalyses 5-amino-1-(5-phospho-D-ribosyl)imidazole-4-carboxylate + L-aspartate + ATP = (2S)-2-[5-amino-1-(5-phospho-beta-D-ribosyl)imidazole-4-carboxamido]succinate + ADP + phosphate + 2 H(+). The protein operates within purine metabolism; IMP biosynthesis via de novo pathway; 5-amino-1-(5-phospho-D-ribosyl)imidazole-4-carboxamide from 5-amino-1-(5-phospho-D-ribosyl)imidazole-4-carboxylate: step 1/2. This Aliivibrio fischeri (strain MJ11) (Vibrio fischeri) protein is Phosphoribosylaminoimidazole-succinocarboxamide synthase.